The chain runs to 262 residues: Conserved oligomeric Golgi complex subunit 2 (262 aa).

As to quaternary structure, component of the conserved oligomeric Golgi (COG or Sec34/Sec35) complex which consists of eight different proteins COG1-COG8. The COG complex interacts with the Rab GTPase YPT1, the Glogi SNAREs GOS1, SEC22, SED5, VTI1 and YKT6 and the COPI coatomer subunit gamma SEC21.

It is found in the golgi apparatus membrane. Functionally, acts as a component of the peripheral membrane COG complex that is involved in intra-Golgi protein trafficking. COG is located at the cis-Golgi, and regulates tethering of retrograde intra-Golgi vesicles and possibly a number of other membrane trafficking events. COG2 is required for ER to Golgi vesicle docking. Not essential for viability. This Saccharomyces cerevisiae (strain ATCC 204508 / S288c) (Baker's yeast) protein is Conserved oligomeric Golgi complex subunit 2 (COG2).